We begin with the raw amino-acid sequence, 217 residues long: Adenylate kinase (217 aa).

Position 11-16 (11-16) interacts with ATP; sequence GSGKGT. The NMP stretch occupies residues 31–61; it reads STGTMLRQALTRSTHKSYELHKNIMHTGDLV. Residues threonine 32, arginine 37, 59 to 61, 87 to 90, and glutamine 94 each bind AMP; these read DLV and GFPR. Positions 124–161 are LID; sequence GRRIHVGSGRTYHIKFNPPRNYGLDDITGEILTTRKDD. ATP-binding positions include arginine 125 and 134–135; that span reads TY. Arginine 158 and arginine 169 together coordinate AMP. Arginine 202 contributes to the ATP binding site.

The protein belongs to the adenylate kinase family. In terms of assembly, monomer.

It localises to the cytoplasm. The catalysed reaction is AMP + ATP = 2 ADP. It functions in the pathway purine metabolism; AMP biosynthesis via salvage pathway; AMP from ADP: step 1/1. Functionally, catalyzes the reversible transfer of the terminal phosphate group between ATP and AMP. Plays an important role in cellular energy homeostasis and in adenine nucleotide metabolism. This is Adenylate kinase from Blochmanniella pennsylvanica (strain BPEN).